Consider the following 119-residue polypeptide: Large ribosomal subunit protein uL18 (119 aa).

This sequence belongs to the universal ribosomal protein uL18 family. As to quaternary structure, part of the 50S ribosomal subunit; part of the 5S rRNA/L5/L18/L25 subcomplex. Contacts the 5S and 23S rRNAs.

In terms of biological role, this is one of the proteins that bind and probably mediate the attachment of the 5S RNA into the large ribosomal subunit, where it forms part of the central protuberance. The chain is Large ribosomal subunit protein uL18 from Cereibacter sphaeroides (strain ATCC 17029 / ATH 2.4.9) (Rhodobacter sphaeroides).